A 282-amino-acid chain; its full sequence is Urease accessory protein UreD (282 aa).

The protein belongs to the UreD family. As to quaternary structure, ureD, UreF and UreG form a complex that acts as a GTP-hydrolysis-dependent molecular chaperone, activating the urease apoprotein by helping to assemble the nickel containing metallocenter of UreC. The UreE protein probably delivers the nickel.

The protein localises to the cytoplasm. Its function is as follows. Required for maturation of urease via the functional incorporation of the urease nickel metallocenter. The protein is Urease accessory protein UreD of Methylobacterium sp. (strain 4-46).